The following is a 773-amino-acid chain: C-Maf-inducing protein (773 aa).

Residues M1–G28 are disordered. Residues L54–Y163 form the PH domain. Residues S349, S377, S382, and S660 each carry the phosphoserine modification. LRR repeat units follow at residues N663–P686, S687–S707, M712–S732, and S736–K756.

In terms of assembly, interacts with FLNA.

Its subcellular location is the nucleus. It is found in the cytoplasm. Functionally, plays a role in T-cell signaling pathway. This chain is C-Maf-inducing protein (Cmip), found in Mus musculus (Mouse).